We begin with the raw amino-acid sequence, 337 residues long: Dihydroorotate dehydrogenase (quinone) (337 aa).

FMN-binding positions include Ala62 to Lys66 and Thr86. Lys66 serves as a coordination point for substrate. Asn111 to Phe115 contacts substrate. FMN-binding residues include Asn139 and Asn172. Position 172 (Asn172) interacts with substrate. Ser175 acts as the Nucleophile in catalysis. Asn177 contributes to the substrate binding site. FMN is bound by residues Lys217 and Thr245. Asn246 to Thr247 is a substrate binding site. FMN-binding positions include Gly268, Gly297, and Tyr318–Ser319.

This sequence belongs to the dihydroorotate dehydrogenase family. Type 2 subfamily. As to quaternary structure, monomer. The cofactor is FMN.

The protein resides in the cell membrane. It catalyses the reaction (S)-dihydroorotate + a quinone = orotate + a quinol. The protein operates within pyrimidine metabolism; UMP biosynthesis via de novo pathway; orotate from (S)-dihydroorotate (quinone route): step 1/1. In terms of biological role, catalyzes the conversion of dihydroorotate to orotate with quinone as electron acceptor. This chain is Dihydroorotate dehydrogenase (quinone), found in Methylobacillus flagellatus (strain ATCC 51484 / DSM 6875 / VKM B-1610 / KT).